A 302-amino-acid chain; its full sequence is Protoheme IX farnesyltransferase (302 aa).

9 helical membrane passes run 28 to 48 (VVAL…PGVP), 50 to 70 (WSVL…AAVV), 95 to 115 (IAPL…MVVL), 122 to 142 (LTAW…TLFL), 150 to 170 (IVIG…AVTG), 176 to 196 (ALLL…ALAI), 221 to 241 (LHIL…FVTG), 243 to 263 (SGGI…QYAV), and 282 to 302 (ITYL…FVPA).

The protein belongs to the UbiA prenyltransferase family. Protoheme IX farnesyltransferase subfamily.

The protein resides in the cell inner membrane. It carries out the reaction heme b + (2E,6E)-farnesyl diphosphate + H2O = Fe(II)-heme o + diphosphate. Its pathway is porphyrin-containing compound metabolism; heme O biosynthesis; heme O from protoheme: step 1/1. Converts heme B (protoheme IX) to heme O by substitution of the vinyl group on carbon 2 of heme B porphyrin ring with a hydroxyethyl farnesyl side group. This chain is Protoheme IX farnesyltransferase, found in Marinobacter nauticus (strain ATCC 700491 / DSM 11845 / VT8) (Marinobacter aquaeolei).